The sequence spans 573 residues: Proline--tRNA ligase (573 aa).

Belongs to the class-II aminoacyl-tRNA synthetase family. ProS type 1 subfamily. In terms of assembly, homodimer.

It is found in the cytoplasm. The catalysed reaction is tRNA(Pro) + L-proline + ATP = L-prolyl-tRNA(Pro) + AMP + diphosphate. Its function is as follows. Catalyzes the attachment of proline to tRNA(Pro) in a two-step reaction: proline is first activated by ATP to form Pro-AMP and then transferred to the acceptor end of tRNA(Pro). As ProRS can inadvertently accommodate and process non-cognate amino acids such as alanine and cysteine, to avoid such errors it has two additional distinct editing activities against alanine. One activity is designated as 'pretransfer' editing and involves the tRNA(Pro)-independent hydrolysis of activated Ala-AMP. The other activity is designated 'posttransfer' editing and involves deacylation of mischarged Ala-tRNA(Pro). The misacylated Cys-tRNA(Pro) is not edited by ProRS. In Citrifermentans bemidjiense (strain ATCC BAA-1014 / DSM 16622 / JCM 12645 / Bem) (Geobacter bemidjiensis), this protein is Proline--tRNA ligase.